The chain runs to 121 residues: Small ribosomal subunit protein uS13 (121 aa).

Residues 93-121 (RKGLPVRGQKTKTNARTRKGKRKTVGAKS) are disordered.

The protein belongs to the universal ribosomal protein uS13 family. Part of the 30S ribosomal subunit. Forms a loose heterodimer with protein S19. Forms two bridges to the 50S subunit in the 70S ribosome.

Located at the top of the head of the 30S subunit, it contacts several helices of the 16S rRNA. In the 70S ribosome it contacts the 23S rRNA (bridge B1a) and protein L5 of the 50S subunit (bridge B1b), connecting the 2 subunits; these bridges are implicated in subunit movement. Contacts the tRNAs in the A and P-sites. This chain is Small ribosomal subunit protein uS13, found in Campylobacter lari (strain RM2100 / D67 / ATCC BAA-1060).